Consider the following 334-residue polypeptide: Anthranilate phosphoribosyltransferase (334 aa).

Residues Gly79, 82–83, Ser87, 89–92, 107–115, and Ser119 each bind 5-phospho-alpha-D-ribose 1-diphosphate; these read GD, NIST, and KHGNRSISS. Residue Gly79 coordinates anthranilate. Ser91 is a binding site for Mg(2+). Asn110 is a binding site for anthranilate. Anthranilate is bound at residue Arg165. 2 residues coordinate Mg(2+): Asp224 and Glu225.

The protein belongs to the anthranilate phosphoribosyltransferase family. As to quaternary structure, homodimer. It depends on Mg(2+) as a cofactor.

It carries out the reaction N-(5-phospho-beta-D-ribosyl)anthranilate + diphosphate = 5-phospho-alpha-D-ribose 1-diphosphate + anthranilate. Its pathway is amino-acid biosynthesis; L-tryptophan biosynthesis; L-tryptophan from chorismate: step 2/5. Its function is as follows. Catalyzes the transfer of the phosphoribosyl group of 5-phosphorylribose-1-pyrophosphate (PRPP) to anthranilate to yield N-(5'-phosphoribosyl)-anthranilate (PRA). The sequence is that of Anthranilate phosphoribosyltransferase from Streptococcus pneumoniae (strain ATCC 700669 / Spain 23F-1).